The following is a 486-amino-acid chain: Secreted protein C (486 aa).

Residues 1–22 (MKINIILLFVGLILAFAVLSNA) form the signal peptide. The tract at residues 30 to 332 (GVNPFDNNNS…SGSHGGSSSH (303 aa)) is disordered. Asn37 carries an N-linked (GlcNAc...) asparagine glycan. Residues 41–60 (SGSGSGSGGGSSSSGSGTGQ) are compositionally biased toward gly residues. Residues 61 to 318 (SSGTVSSSGS…TGSSEYSSSS (258 aa)) are compositionally biased toward low complexity. 7 N-linked (GlcNAc...) asparagine glycosylation sites follow: Asn73, Asn74, Asn83, Asn112, Asn129, Asn149, and Asn174.

Belongs to the Sct family.

Its subcellular location is the secreted. This Dictyostelium discoideum (Social amoeba) protein is Secreted protein C.